Consider the following 488-residue polypeptide: UDP-GalNAc:beta-1,3-N-acetylgalactosaminyltransferase 2 (488 aa).

Residues Met1–Arg2 are Cytoplasmic-facing. A helical; Signal-anchor for type II membrane protein membrane pass occupies residues His3 to Phe23. Residues Asn24, Asn105, and Asn162 are each glycosylated (N-linked (GlcNAc...) asparagine). Topologically, residues Asn24–Arg488 are lumenal.

Belongs to the glycosyltransferase 31 family.

Its subcellular location is the golgi apparatus membrane. The protein localises to the endoplasmic reticulum. The enzyme catalyses 3-O-(N-acetyl-beta-D-glucosaminyl-(1-&gt;4)-alpha-D-mannosyl)-L-threonyl-[protein] + UDP-N-acetyl-alpha-D-galactosamine = 3-O-[beta-D-GalNAc-(1-&gt;3)-beta-D-GlcNAc-(1-&gt;4)-alpha-D-Man]-L-Thr-[protein] + UDP + H(+). Its pathway is protein modification; protein glycosylation. Beta-1,3-N-acetylgalactosaminyltransferase that synthesizes a unique carbohydrate structure, GalNAc-beta-1-3GlcNAc, on N- and O-glycans. Has no galactose nor galactosaminyl transferase activity toward any acceptor substrate. Involved in alpha-dystroglycan (dag1) glycosylation. This chain is UDP-GalNAc:beta-1,3-N-acetylgalactosaminyltransferase 2 (b3galnt2), found in Xenopus tropicalis (Western clawed frog).